A 212-amino-acid chain; its full sequence is MAETKQLGILRFIYEKQNEKGYPPTVREIGEAVGLSSTSTVHGHIDRLEKHGLLHKDPTKPRAIEITEKGLRALGVPETPGKVPIIGLVTAGMPILAVEQAATEFLPIPSDLERFDGDLFVLRVSGTSMINIGILDGDMVFVRKQDYADNGDIVVAMTTDFGNGEGEATVKRFFKESNHYRLQPENDTMAPIIVKNVSILGKVVGLYRNSIY.

Residues 26 to 46 (VREIGEAVGLSSTSTVHGHID) constitute a DNA-binding region (H-T-H motif). Active-site for autocatalytic cleavage activity residues include Ser-128 and Lys-171.

Belongs to the peptidase S24 family. As to quaternary structure, homodimer.

The catalysed reaction is Hydrolysis of Ala-|-Gly bond in repressor LexA.. Represses a number of genes involved in the response to DNA damage (SOS response), including recA and lexA. In the presence of single-stranded DNA, RecA interacts with LexA causing an autocatalytic cleavage which disrupts the DNA-binding part of LexA, leading to derepression of the SOS regulon and eventually DNA repair. The protein is LexA repressor of Oenococcus oeni (strain ATCC BAA-331 / PSU-1).